A 521-amino-acid chain; its full sequence is AAA ATPase forming ring-shaped complexes (521 aa).

The stretch at 4–44 forms a coiled coil; sequence TEDLAALNDRLMAKNHALAEALSRAGKELTKAKSQLAQLAQ. An ATP-binding site is contributed by 235-240; that stretch reads GNGKTM.

Belongs to the AAA ATPase family. Homohexamer. Assembles into a hexameric ring structure.

The polypeptide is AAA ATPase forming ring-shaped complexes (Bifidobacterium longum (strain DJO10A)).